The following is a 198-amino-acid chain: Acyl carrier protein phosphodiesterase (198 aa).

This sequence belongs to the AcpH family.

The enzyme catalyses holo-[ACP] + H2O = apo-[ACP] + (R)-4'-phosphopantetheine + H(+). In terms of biological role, converts holo-ACP to apo-ACP by hydrolytic cleavage of the phosphopantetheine prosthetic group from ACP. This chain is Acyl carrier protein phosphodiesterase, found in Photorhabdus laumondii subsp. laumondii (strain DSM 15139 / CIP 105565 / TT01) (Photorhabdus luminescens subsp. laumondii).